A 400-amino-acid polypeptide reads, in one-letter code: MSKNRRLFTSESVTEGHPDKICDQISDSILDEILKKDPNARVACETSVTTGLVLVSGEITTSTYVDIPKTVRQTIKEIGYTRAKYGFDAETCAVLTSIDEQSADIAMGVDQALEAREGTMSDEEIEAIGAGDQGLMFGYACNETKELMPLPISLAHKLARRLSEVRKEDILPYLRPDGKTQVTVEYDENNKPVRIDAIVISTQHHPEITLEQIQRNIKEHVINPVVPEELIDEETKYFINPTGRFVIGGPQGDAGLTGRKIIVDTYGGYARHGGGAFSGKDATKVDRSAAYAARYVAKNIVAAELADSCEVQLAYAIGVAQPVSISINTFGSGKASEEKLIEVVRNNFDLRPAGIIKMLDLRRPIYKQTAAYGHFGRHDVDLPWERTDKAEQLRKEALGE.

An ATP-binding site is contributed by His17. Mg(2+) is bound at residue Asp19. A K(+)-binding site is contributed by Glu45. Glu58 and Gln101 together coordinate L-methionine. Residues 101–111 are flexible loop; it reads QSADIAMGVDQ. ATP is bound by residues 177-179, 244-245, Asp253, 259-260, Ala276, and Lys280; these read DGK, RF, and RK. L-methionine is bound at residue Asp253. Residue Lys284 participates in L-methionine binding.

It belongs to the AdoMet synthase family. In terms of assembly, homotetramer; dimer of dimers. Mg(2+) is required as a cofactor. It depends on K(+) as a cofactor.

The protein localises to the cytoplasm. The enzyme catalyses L-methionine + ATP + H2O = S-adenosyl-L-methionine + phosphate + diphosphate. Its pathway is amino-acid biosynthesis; S-adenosyl-L-methionine biosynthesis; S-adenosyl-L-methionine from L-methionine: step 1/1. Functionally, catalyzes the formation of S-adenosylmethionine (AdoMet) from methionine and ATP. The overall synthetic reaction is composed of two sequential steps, AdoMet formation and the subsequent tripolyphosphate hydrolysis which occurs prior to release of AdoMet from the enzyme. In Bacillus subtilis (strain 168), this protein is S-adenosylmethionine synthase.